The primary structure comprises 143 residues: Large ribosomal subunit protein uL11 (143 aa).

It belongs to the universal ribosomal protein uL11 family. Part of the ribosomal stalk of the 50S ribosomal subunit. Interacts with L10 and the large rRNA to form the base of the stalk. L10 forms an elongated spine to which L12 dimers bind in a sequential fashion forming a multimeric L10(L12)X complex. In terms of processing, one or more lysine residues are methylated.

Functionally, forms part of the ribosomal stalk which helps the ribosome interact with GTP-bound translation factors. In Acidovorax ebreus (strain TPSY) (Diaphorobacter sp. (strain TPSY)), this protein is Large ribosomal subunit protein uL11.